Here is a 77-residue protein sequence, read N- to C-terminus: Envelope protein US9 homolog (77 aa).

A Di-leucine internalization motif motif is present at residues 12 to 13 (LL).

This sequence belongs to the alphaherpesvirinae envelope protein US9 family.

In Chlorocebus aethiops (Green monkey), this protein is Envelope protein US9 homolog.